Reading from the N-terminus, the 475-residue chain is Ribulose bisphosphate carboxylase large chain (475 aa).

Positions methionine 1–serine 2 are excised as a propeptide. At proline 3 the chain carries N-acetylproline. Lysine 14 carries the post-translational modification N6,N6,N6-trimethyllysine. 2 residues coordinate substrate: asparagine 123 and threonine 173. Lysine 175 acts as the Proton acceptor in catalysis. Lysine 177 contributes to the substrate binding site. Mg(2+) is bound by residues lysine 201, aspartate 203, and glutamate 204. Position 201 is an N6-carboxylysine (lysine 201). The active-site Proton acceptor is histidine 294. Residues arginine 295, histidine 327, and serine 379 each coordinate substrate.

This sequence belongs to the RuBisCO large chain family. Type I subfamily. As to quaternary structure, heterohexadecamer of 8 large chains and 8 small chains; disulfide-linked. The disulfide link is formed within the large subunit homodimers. Mg(2+) is required as a cofactor. The disulfide bond which can form in the large chain dimeric partners within the hexadecamer appears to be associated with oxidative stress and protein turnover.

It localises to the plastid. It is found in the chloroplast. It catalyses the reaction 2 (2R)-3-phosphoglycerate + 2 H(+) = D-ribulose 1,5-bisphosphate + CO2 + H2O. It carries out the reaction D-ribulose 1,5-bisphosphate + O2 = 2-phosphoglycolate + (2R)-3-phosphoglycerate + 2 H(+). RuBisCO catalyzes two reactions: the carboxylation of D-ribulose 1,5-bisphosphate, the primary event in carbon dioxide fixation, as well as the oxidative fragmentation of the pentose substrate in the photorespiration process. Both reactions occur simultaneously and in competition at the same active site. The chain is Ribulose bisphosphate carboxylase large chain from Piper cenocladum (Ant piper).